A 544-amino-acid polypeptide reads, in one-letter code: Chaperonin GroEL 2 (544 aa).

Residues 30 to 33, 87 to 91, Gly415, 480 to 482, and Asp496 each bind ATP; these read TLGP, DGTTT, and NAA.

The protein belongs to the chaperonin (HSP60) family. Forms a cylinder of 14 subunits composed of two heptameric rings stacked back-to-back. Interacts with the co-chaperonin GroES.

The protein localises to the cytoplasm. The catalysed reaction is ATP + H2O + a folded polypeptide = ADP + phosphate + an unfolded polypeptide.. In terms of biological role, together with its co-chaperonin GroES, plays an essential role in assisting protein folding. The GroEL-GroES system forms a nano-cage that allows encapsulation of the non-native substrate proteins and provides a physical environment optimized to promote and accelerate protein folding. The chain is Chaperonin GroEL 2 from Albidiferax ferrireducens (strain ATCC BAA-621 / DSM 15236 / T118) (Rhodoferax ferrireducens).